The following is a 37-amino-acid chain: Large ribosomal subunit protein bL36 (37 aa).

The protein belongs to the bacterial ribosomal protein bL36 family.

This chain is Large ribosomal subunit protein bL36, found in Azoarcus sp. (strain BH72).